Here is a 1077-residue protein sequence, read N- to C-terminus: Serine/threonine-protein kinase sel-5 (1077 aa).

Residues Val47–Glu317 enclose the Protein kinase domain. Residues Ile53–Val61 and Lys75 contribute to the ATP site. The active-site Proton acceptor is the Asp178. Disordered regions lie at residues Met347–Ser444, Gly488–Val554, Glu616–Phe813, and Leu920–Leu1077. Residues Ile369–Thr399 are compositionally biased toward polar residues. A compositionally biased stretch (basic and acidic residues) spans Asp491 to Asp515. The span at Ser541–Val554 shows a compositional bias: low complexity. Over residues Leu638–Pro648 the composition is skewed to polar residues. Residues Thr655–Glu679 are compositionally biased toward acidic residues. Composition is skewed to basic and acidic residues over residues Asp697 to Ser708 and Asp739 to Asp751. Positions Glu770 to His780 are enriched in acidic residues. The span at Gly799–Thr810 shows a compositional bias: polar residues. Residues Thr927–Lys936 are compositionally biased toward pro residues. Positions Ala941–Thr950 are enriched in polar residues. Residues Lys960–Glu969 are compositionally biased toward basic residues. Positions Lys970 to Ser989 are enriched in basic and acidic residues. Over residues Leu1054 to Gln1067 the composition is skewed to polar residues.

The protein belongs to the protein kinase superfamily. Ser/Thr protein kinase family. It depends on Mg(2+) as a cofactor.

It localises to the cytoplasm. It carries out the reaction L-seryl-[protein] + ATP = O-phospho-L-seryl-[protein] + ADP + H(+). The catalysed reaction is L-threonyl-[protein] + ATP = O-phospho-L-threonyl-[protein] + ADP + H(+). In terms of biological role, serine/threonine-protein kinase which may play a role in lin-12-mediated cell-fate decisions. In Caenorhabditis elegans, this protein is Serine/threonine-protein kinase sel-5.